A 110-amino-acid chain; its full sequence is Hydrogenase maturation factor HypA (110 aa).

Ni(2+) is bound at residue H2. Zn(2+) contacts are provided by C70, C73, C86, and C89.

The protein belongs to the HypA/HybF family.

Its function is as follows. Involved in the maturation of [NiFe] hydrogenases. Required for nickel insertion into the metal center of the hydrogenase. The protein is Hydrogenase maturation factor HypA of Geobacter sp. (strain M21).